Here is a 215-residue protein sequence, read N- to C-terminus: Sodium channel regulatory subunit beta-2 (215 aa).

A signal peptide spans Met1–Ser29. Residues Met30–Thr157 lie on the Extracellular side of the membrane. One can recognise an Ig-like C2-type domain in the interval Val32–Arg154. Asn42, Asn66, and Asn74 each carry an N-linked (GlcNAc...) asparagine glycan. 2 disulfides stabilise this stretch: Cys50–Cys127 and Cys72–Cys75. The chain crosses the membrane as a helical span at residues Val158–Val179. At Val180–Lys215 the chain is on the cytoplasmic side. The disordered stretch occupies residues Lys187 to Lys215. Residues Gln189–Lys215 show a composition bias toward basic and acidic residues. Phosphoserine is present on Ser192. Residue Thr204 is modified to Phosphothreonine.

The protein belongs to the sodium channel auxiliary subunit SCN2B (TC 8.A.17) family. As to quaternary structure, a voltage-gated sodium (Nav) channel consists of an ion-conducting pore-forming alpha subunit functional on its own that is regulated by one or more beta subunits. The beta subunit SCN2B is disulfide-linked to the pore-forming alpha subunit. Interacts with SCN1A; regulatory subunit of SCN1A/Nav1.1. Interacts with SCN2A; regulatory subunit of SCN2A/Nav1.2. Interacts with SCN3A; regulatory subunit of SCN3A/Nav1.3. Interacts with SCN5A; regulatory subunit of SCN5A/Nav1.5. Interacts with SCN8A; regulatory subunit of SCN8A/Nav1.6. Interacts with SCN9A; regulatory subunit of SCN9A/Nav1.7. Interacts with SCN10A; regulatory subunit of SCN10A/Nav1.8. Interacts with TNR; may play a crucial role in clustering and regulation of activity of SCN2B-containing Nav channels at nodes of Ranvier.

Its subcellular location is the cell membrane. It localises to the cell projection. The protein localises to the axon. Its function is as follows. Regulatory subunit of multiple voltage-gated sodium (Nav) channels directly mediating the depolarization of excitable membranes. Navs, also called VGSCs (voltage-gated sodium channels) or VDSCs (voltage-dependent sodium channels), operate by switching between closed and open conformations depending on the voltage difference across the membrane. In the open conformation they allow Na(+) ions to selectively pass through the pore, along their electrochemical gradient. The influx of Na+ ions provokes membrane depolarization, initiating the propagation of electrical signals throughout cells and tissues. The accessory beta subunits participate in localization and functional modulation of the Nav channels. Modulates the activity of SCN1A/Nav1.1, SCN2A/Nav1.2, SCN2A/Nav1.3, SCN5A/Nav1.5, SCN8A/Nav1.6, SCN9A/Nav1.7 and SCN10A/Nav1.8. This chain is Sodium channel regulatory subunit beta-2, found in Rattus norvegicus (Rat).